A 161-amino-acid chain; its full sequence is Lincosamide resistance protein (161 aa).

This chain is Lincosamide resistance protein (linA), found in Staphylococcus haemolyticus.